The following is a 105-amino-acid chain: Met repressor (105 aa).

It belongs to the MetJ family. As to quaternary structure, homodimer.

The protein resides in the cytoplasm. In terms of biological role, this regulatory protein, when combined with SAM (S-adenosylmethionine) represses the expression of the methionine regulon and of enzymes involved in SAM synthesis. In Yersinia pestis bv. Antiqua (strain Antiqua), this protein is Met repressor.